The chain runs to 582 residues: tRNA(Ile)-lysidine synthase (582 aa).

46 to 51 (SGGADS) is an ATP binding site. Residues 402 to 525 (DPLHAAMGEA…DLLADHWGWR (124 aa)) enclose the CMP/dCMP-type deaminase domain. Residues 548 to 582 (VRRRSADTPQTPNAETPAPRSSRSTSASGKPTMLE) are disordered. Residues 563–575 (TPAPRSSRSTSAS) show a composition bias toward low complexity.

It belongs to the tRNA(Ile)-lysidine synthase family.

It is found in the cytoplasm. The catalysed reaction is cytidine(34) in tRNA(Ile2) + L-lysine + ATP = lysidine(34) in tRNA(Ile2) + AMP + diphosphate + H(+). Functionally, ligates lysine onto the cytidine present at position 34 of the AUA codon-specific tRNA(Ile) that contains the anticodon CAU, in an ATP-dependent manner. Cytidine is converted to lysidine, thus changing the amino acid specificity of the tRNA from methionine to isoleucine. The sequence is that of tRNA(Ile)-lysidine synthase from Deinococcus radiodurans (strain ATCC 13939 / DSM 20539 / JCM 16871 / CCUG 27074 / LMG 4051 / NBRC 15346 / NCIMB 9279 / VKM B-1422 / R1).